A 251-amino-acid chain; its full sequence is tRNA pseudouridine synthase A (251 aa).

Catalysis depends on D54, which acts as the Nucleophile. Y111 contacts substrate.

The protein belongs to the tRNA pseudouridine synthase TruA family. Homodimer.

It catalyses the reaction uridine(38/39/40) in tRNA = pseudouridine(38/39/40) in tRNA. Formation of pseudouridine at positions 38, 39 and 40 in the anticodon stem and loop of transfer RNAs. The chain is tRNA pseudouridine synthase A from Mycoplasma mycoides subsp. mycoides SC (strain CCUG 32753 / NCTC 10114 / PG1).